Here is a 154-residue protein sequence, read N- to C-terminus: Ribonuclease P protein component (154 aa).

It belongs to the RnpA family. In terms of assembly, consists of a catalytic RNA component (M1 or rnpB) and a protein subunit.

It carries out the reaction Endonucleolytic cleavage of RNA, removing 5'-extranucleotides from tRNA precursor.. In terms of biological role, RNaseP catalyzes the removal of the 5'-leader sequence from pre-tRNA to produce the mature 5'-terminus. It can also cleave other RNA substrates such as 4.5S RNA. The protein component plays an auxiliary but essential role in vivo by binding to the 5'-leader sequence and broadening the substrate specificity of the ribozyme. The sequence is that of Ribonuclease P protein component from Chlorobaculum tepidum (strain ATCC 49652 / DSM 12025 / NBRC 103806 / TLS) (Chlorobium tepidum).